We begin with the raw amino-acid sequence, 152 residues long: Ubiquitin-conjugating enzyme E2 2 (152 aa).

The region spanning Pro4–Thr150 is the UBC core domain. Catalysis depends on Cys88, which acts as the Glycyl thioester intermediate.

The protein belongs to the ubiquitin-conjugating enzyme family.

It carries out the reaction S-ubiquitinyl-[E1 ubiquitin-activating enzyme]-L-cysteine + [E2 ubiquitin-conjugating enzyme]-L-cysteine = [E1 ubiquitin-activating enzyme]-L-cysteine + S-ubiquitinyl-[E2 ubiquitin-conjugating enzyme]-L-cysteine.. It functions in the pathway protein modification; protein ubiquitination. Its function is as follows. Catalyzes the covalent attachment of ubiquitin to other proteins. The protein is Ubiquitin-conjugating enzyme E2 2 (UBC2) of Triticum aestivum (Wheat).